The sequence spans 292 residues: Diaminopimelate epimerase (292 aa).

Substrate contacts are provided by N13, Q46, and N66. The Proton donor role is filled by C75. Residues 76-77, N166, N199, and 217-218 each bind substrate; these read GN and ER. The active-site Proton acceptor is C226. 227–228 serves as a coordination point for substrate; the sequence is GT.

Belongs to the diaminopimelate epimerase family. Homodimer.

The protein resides in the cytoplasm. It carries out the reaction (2S,6S)-2,6-diaminopimelate = meso-2,6-diaminopimelate. Its pathway is amino-acid biosynthesis; L-lysine biosynthesis via DAP pathway; DL-2,6-diaminopimelate from LL-2,6-diaminopimelate: step 1/1. Its function is as follows. Catalyzes the stereoinversion of LL-2,6-diaminopimelate (L,L-DAP) to meso-diaminopimelate (meso-DAP), a precursor of L-lysine and an essential component of the bacterial peptidoglycan. This chain is Diaminopimelate epimerase, found in Ralstonia nicotianae (strain ATCC BAA-1114 / GMI1000) (Ralstonia solanacearum).